We begin with the raw amino-acid sequence, 487 residues long: Protein nucleotidyltransferase YdiU (487 aa).

ATP contacts are provided by G86, G88, R89, K109, D121, G122, R172, and R179. Residue D248 is the Proton acceptor of the active site. Mg(2+)-binding residues include N249 and D258. Residue D258 participates in ATP binding.

It belongs to the SELO family. Mg(2+) is required as a cofactor. Mn(2+) serves as cofactor.

It catalyses the reaction L-seryl-[protein] + ATP = 3-O-(5'-adenylyl)-L-seryl-[protein] + diphosphate. The enzyme catalyses L-threonyl-[protein] + ATP = 3-O-(5'-adenylyl)-L-threonyl-[protein] + diphosphate. It carries out the reaction L-tyrosyl-[protein] + ATP = O-(5'-adenylyl)-L-tyrosyl-[protein] + diphosphate. The catalysed reaction is L-histidyl-[protein] + UTP = N(tele)-(5'-uridylyl)-L-histidyl-[protein] + diphosphate. It catalyses the reaction L-seryl-[protein] + UTP = O-(5'-uridylyl)-L-seryl-[protein] + diphosphate. The enzyme catalyses L-tyrosyl-[protein] + UTP = O-(5'-uridylyl)-L-tyrosyl-[protein] + diphosphate. Its function is as follows. Nucleotidyltransferase involved in the post-translational modification of proteins. It can catalyze the addition of adenosine monophosphate (AMP) or uridine monophosphate (UMP) to a protein, resulting in modifications known as AMPylation and UMPylation. The sequence is that of Protein nucleotidyltransferase YdiU from Sphingopyxis alaskensis (strain DSM 13593 / LMG 18877 / RB2256) (Sphingomonas alaskensis).